The primary structure comprises 526 residues: Peptide chain release factor 3 (526 aa).

The tr-type G domain occupies 9 to 277 (NKRRTFAIIS…DFVEYAPGPQ (269 aa)). GTP is bound by residues 18 to 25 (SHPDAGKT), 86 to 90 (DTPGH), and 140 to 143 (NKLD).

The protein belongs to the TRAFAC class translation factor GTPase superfamily. Classic translation factor GTPase family. PrfC subfamily.

It localises to the cytoplasm. Its function is as follows. Increases the formation of ribosomal termination complexes and stimulates activities of RF-1 and RF-2. It binds guanine nucleotides and has strong preference for UGA stop codons. It may interact directly with the ribosome. The stimulation of RF-1 and RF-2 is significantly reduced by GTP and GDP, but not by GMP. The chain is Peptide chain release factor 3 from Legionella pneumophila (strain Corby).